Consider the following 324-residue polypeptide: Malate dehydrogenase (324 aa).

NAD(+)-binding positions include 21–26 (GAGRVG) and aspartate 45. Positions 94 and 100 each coordinate substrate. NAD(+)-binding positions include asparagine 107 and 130–132 (VTN). Substrate-binding residues include asparagine 132 and arginine 163. Histidine 187 acts as the Proton acceptor in catalysis.

This sequence belongs to the LDH/MDH superfamily. MDH type 3 family.

It carries out the reaction (S)-malate + NAD(+) = oxaloacetate + NADH + H(+). In terms of biological role, catalyzes the reversible oxidation of malate to oxaloacetate. The protein is Malate dehydrogenase of Trichormus variabilis (strain ATCC 29413 / PCC 7937) (Anabaena variabilis).